The sequence spans 185 residues: Large ribosomal subunit protein uL5 (185 aa).

It belongs to the universal ribosomal protein uL5 family. In terms of assembly, part of the 50S ribosomal subunit; part of the 5S rRNA/L5/L18/L25 subcomplex. Contacts the 5S rRNA and the P site tRNA. Forms a bridge to the 30S subunit in the 70S ribosome.

In terms of biological role, this is one of the proteins that bind and probably mediate the attachment of the 5S RNA into the large ribosomal subunit, where it forms part of the central protuberance. In the 70S ribosome it contacts protein S13 of the 30S subunit (bridge B1b), connecting the 2 subunits; this bridge is implicated in subunit movement. Contacts the P site tRNA; the 5S rRNA and some of its associated proteins might help stabilize positioning of ribosome-bound tRNAs. The protein is Large ribosomal subunit protein uL5 of Parvibaculum lavamentivorans (strain DS-1 / DSM 13023 / NCIMB 13966).